Consider the following 94-residue polypeptide: Small ribosomal subunit protein uS19 (94 aa).

This sequence belongs to the universal ribosomal protein uS19 family.

Its function is as follows. Protein S19 forms a complex with S13 that binds strongly to the 16S ribosomal RNA. The polypeptide is Small ribosomal subunit protein uS19 (Wolbachia sp. subsp. Brugia malayi (strain TRS)).